A 425-amino-acid chain; its full sequence is COP9 signalosome complex subunit 1 (425 aa).

Positions 219-379 (ASSGVPPEIY…KSKALQTLEN (161 aa)) constitute a PCI domain.

Belongs to the CSN1 family. As to quaternary structure, component of the COP9 signalosome (CSN) complex.

It localises to the cytoplasm. The protein localises to the nucleus. Its function is as follows. Component of the COP9 signalosome (CSN) complex that acts as an regulator of the ubiquitin (Ubl) conjugation pathway by mediating the deneddylation of the cullin subunit of SCF-type E3 ubiquitin-protein ligase complexes. The CSN complex is involved in the regulation of the circadian clock through its control of the stability of the SCF(FWD-1) complex. The protein is COP9 signalosome complex subunit 1 (csn-1) of Neurospora crassa (strain ATCC 24698 / 74-OR23-1A / CBS 708.71 / DSM 1257 / FGSC 987).